The chain runs to 278 residues: Expansin-B17 (278 aa).

A signal peptide spans 1 to 26 (MAAASSRSFSLCVLLLLLLLAPPISA). The 111-residue stretch at 66 to 176 (GGACGYGSLV…RRTACKYGGK (111 aa)) folds into the Expansin-like EG45 domain. Cystine bridges form between Cys69/Cys98, Cys101/Cys171, and Cys106/Cys112. In terms of domain architecture, Expansin-like CBD spans 189 to 270 (FWLSLLVEFE…NWKPTATYTS (82 aa)).

The protein belongs to the expansin family. Expansin B subfamily.

It localises to the secreted. Its subcellular location is the cell wall. The protein localises to the membrane. May cause loosening and extension of plant cell walls by disrupting non-covalent bonding between cellulose microfibrils and matrix glucans. No enzymatic activity has been found. May be required for rapid internodal elongation in deepwater rice during submergence. This Oryza sativa subsp. japonica (Rice) protein is Expansin-B17 (EXPB17).